Here is a 576-residue protein sequence, read N- to C-terminus: Putative export ATP-binding/permease protein RF_0214 (576 aa).

In terms of domain architecture, ABC transmembrane type-1 spans 20 to 303 (LIIVMISLLS…IFELLSEIHL (284 aa)). 6 consecutive transmembrane segments (helical) span residues 21–41 (IIVM…GSVF), 61–81 (ILYI…RSYF), 135–155 (FLSF…LMFF), 158–178 (FKLA…LIKF), 242–262 (ALFF…VVWI), and 277–297 (IISF…IFEL). Residues 336-572 (IEFKNVDFTY…SEIYRNICRE (237 aa)) form the ABC transporter domain. 371–378 (GRSGGGKS) serves as a coordination point for ATP.

It belongs to the ABC transporter superfamily. In terms of assembly, homodimer.

It localises to the cell inner membrane. Part of an ABC transporter complex. Transmembrane domains (TMD) form a pore in the inner membrane and the ATP-binding domain (NBD) is responsible for energy generation. The sequence is that of Putative export ATP-binding/permease protein RF_0214 from Rickettsia felis (strain ATCC VR-1525 / URRWXCal2) (Rickettsia azadi).